We begin with the raw amino-acid sequence, 1150 residues long: RNA polymerase-associated protein CTR9 (1150 aa).

TPR repeat units follow at residues 143–176, 177–210, 212–245, 247–282, 320–353, 355–388, 432–464, 471–504, 594–627, 643–677, 679–711, 712–745, and 748–781; these read VRAWFYLFERDKSTNKYELADQQFNYVVKTNPKN, VLPLIGKAVIAFNKKDYKTAIYYFRKAIRQCRHT, ADLRVGIGHCFAKMGMMDKAKTAFERAMEIEPYN, SAMCGLGIILLNTYDHDSLKHAVSLFGRSYNLQTDH, AEAFYQMGRCRHAQGQFDGAYKYYYQARQANNGE, TLAHYGLGQMYIHRNEIEEAIKCFDTVHKRLPNN, YEACIDLAQLLEATDPKRSLELYENAIDLLVTN, PEMLNNVGALYMSMKQYEKAEHHFKRAKERLEEQ, PIVWTLIGNLHFAKNEWMPAQKKFEFILSKIFNN, FEQLLNPSRKKEDEKKYIDRALQMYQKALKLQPKN, YAANGIGCVLAYKRNWNDARDVFSQVRESTSEF, YDVWLNIAHVCMEREQWMAAVQMYSSAMKKFRKE, and STLQHYLAKAYYRANMLNEAKEALECAMLDQLDN. Coiled coils occupy residues 848–916 and 972–1028; these read AEEA…NLRL and ERRE…AKQS. Positions 935–1150 are disordered; that stretch reads KRRGGGGRKR…KKKVIESDSD (216 aa). The span at 975 to 992 shows a compositional bias: basic residues; it reads ERRKKDKAAKKASRKKRE. 4 stretches are compositionally biased toward basic and acidic residues: residues 993–1005, 1013–1024, 1060–1084, and 1132–1150; these read RRDSGGPDSNRRD, EERDRKLQEKLS, DPRPPVDEFDSPTRTDSDSDRETTT, and RDSDGSDAPKKKVIESDSD.

In terms of assembly, component of the PAF1 complex which consists of at least cdc-73, ctr-9, leo-1, pafo-1 and rtfo-1.

It is found in the nucleus. In terms of biological role, component of the PAF1 complex which is a multifunctional complex involved in transcription initiation via genetic interactions with TATA-binding proteins, elongation and transcription-coupled histone modification. Ctr-9 is required for epidermal microtubule organization during morphogenesis. The polypeptide is RNA polymerase-associated protein CTR9 (Caenorhabditis elegans).